We begin with the raw amino-acid sequence, 177 residues long: UPF0114 protein HP_0189 (177 aa).

A run of 3 helical transmembrane segments spans residues 15-35 (WLLA…GYVF), 54-74 (LVLS…VLMV), and 145-165 (PIFW…LAAV).

This sequence belongs to the UPF0114 family.

Its subcellular location is the cell membrane. This chain is UPF0114 protein HP_0189, found in Helicobacter pylori (strain ATCC 700392 / 26695) (Campylobacter pylori).